Here is a 412-residue protein sequence, read N- to C-terminus: Serine hydroxymethyltransferase (412 aa).

(6S)-5,6,7,8-tetrahydrofolate is bound by residues leucine 117 and 121 to 123 (GHL). Lysine 226 carries the post-translational modification N6-(pyridoxal phosphate)lysine. 349–351 (SPF) serves as a coordination point for (6S)-5,6,7,8-tetrahydrofolate.

This sequence belongs to the SHMT family. As to quaternary structure, homodimer. The cofactor is pyridoxal 5'-phosphate.

It localises to the cytoplasm. It catalyses the reaction (6R)-5,10-methylene-5,6,7,8-tetrahydrofolate + glycine + H2O = (6S)-5,6,7,8-tetrahydrofolate + L-serine. Its pathway is one-carbon metabolism; tetrahydrofolate interconversion. The protein operates within amino-acid biosynthesis; glycine biosynthesis; glycine from L-serine: step 1/1. Its function is as follows. Catalyzes the reversible interconversion of serine and glycine with tetrahydrofolate (THF) serving as the one-carbon carrier. This reaction serves as the major source of one-carbon groups required for the biosynthesis of purines, thymidylate, methionine, and other important biomolecules. Also exhibits THF-independent aldolase activity toward beta-hydroxyamino acids, producing glycine and aldehydes, via a retro-aldol mechanism. This Oleidesulfovibrio alaskensis (strain ATCC BAA-1058 / DSM 17464 / G20) (Desulfovibrio alaskensis) protein is Serine hydroxymethyltransferase.